The chain runs to 443 residues: Glutamate--tRNA ligase 1 (443 aa).

The 'HIGH' region motif lies at 7 to 17 (PSPTGYLHVGN). Residues 236–240 (KISKR) carry the 'KMSKS' region motif. Lys239 contacts ATP.

The protein belongs to the class-I aminoacyl-tRNA synthetase family. Glutamate--tRNA ligase type 1 subfamily. As to quaternary structure, monomer.

It is found in the cytoplasm. It catalyses the reaction tRNA(Glu) + L-glutamate + ATP = L-glutamyl-tRNA(Glu) + AMP + diphosphate. Its function is as follows. Catalyzes the attachment of glutamate to tRNA(Glu) in a two-step reaction: glutamate is first activated by ATP to form Glu-AMP and then transferred to the acceptor end of tRNA(Glu). This Ehrlichia chaffeensis (strain ATCC CRL-10679 / Arkansas) protein is Glutamate--tRNA ligase 1.